A 304-amino-acid chain; its full sequence is Ribosomal RNA small subunit methyltransferase H (304 aa).

S-adenosyl-L-methionine contacts are provided by residues 50-52 (GGH), aspartate 69, phenylalanine 97, aspartate 113, and glutamine 120.

This sequence belongs to the methyltransferase superfamily. RsmH family.

It is found in the cytoplasm. It carries out the reaction cytidine(1402) in 16S rRNA + S-adenosyl-L-methionine = N(4)-methylcytidine(1402) in 16S rRNA + S-adenosyl-L-homocysteine + H(+). Specifically methylates the N4 position of cytidine in position 1402 (C1402) of 16S rRNA. This chain is Ribosomal RNA small subunit methyltransferase H, found in Rippkaea orientalis (strain PCC 8801 / RF-1) (Cyanothece sp. (strain PCC 8801)).